The following is a 219-amino-acid chain: MAHSCTAVVPLFKNLNDEARAAIDALTHERQVEKGTVLISPDTAAHLLVVAHGKLKTYQLATNGKEQLLRVDGVGDYEGEAGLLNIANPNVYTETLTAATVCTISATDFQQLLLKQPQISLQLLTENARKMQALEKQAGYLGNDSINVRLTHYLLDLRTAAGQDTVTVPMAWTQLADYLGTTPETVSRTLKRLAEEKLIERSGKQVRILNAEDMEDFAW.

The 69-residue stretch at 144 to 212 (DSINVRLTHY…GKQVRILNAE (69 aa)) folds into the HTH crp-type domain. Positions 191–210 (KRLAEEKLIERSGKQVRILN) form a DNA-binding region, H-T-H motif.

In Lacticaseibacillus casei (Lactobacillus casei), this protein is Probable transcriptional regulator flp (flp).